Reading from the N-terminus, the 266-residue chain is Cytochrome c oxidase assembly factor 7 homolog (266 aa).

Sel1-like repeat units follow at residues 32–64 (PEAC…DDYG) and 66–104 (AKSC…NLND). Positions 166–179 (AVTASSGSGTSSPP) are enriched in low complexity. The tract at residues 166–187 (AVTASSGSGTSSPPAGQPPLKD) is disordered. A Sel1-like 3 repeat occupies 212-247 (MYACANLSQMYARGDGIEKNEKEAEKYKKLALEMQD).

This sequence belongs to the hcp beta-lactamase family.

Functionally, required for locomotion. Probably involved in the regulation of formation/maintenance of motor neurons at presynaptic terminals at the neuromuscular junction. This Drosophila melanogaster (Fruit fly) protein is Cytochrome c oxidase assembly factor 7 homolog.